The following is a 260-amino-acid chain: NH(3)-dependent NAD(+) synthetase (260 aa).

ATP is bound at residue 31–38 (GLSGGLDS). D37 contributes to the Mg(2+) binding site. R112 provides a ligand contact to deamido-NAD(+). An ATP-binding site is contributed by T132. E137 contributes to the Mg(2+) binding site. ATP-binding residues include K161 and S183.

Belongs to the NAD synthetase family. Homodimer.

It carries out the reaction deamido-NAD(+) + NH4(+) + ATP = AMP + diphosphate + NAD(+) + H(+). It participates in cofactor biosynthesis; NAD(+) biosynthesis; NAD(+) from deamido-NAD(+) (ammonia route): step 1/1. Catalyzes the ATP-dependent amidation of deamido-NAD to form NAD. Uses ammonia as a nitrogen source. The polypeptide is NH(3)-dependent NAD(+) synthetase (Helicobacter pylori (strain P12)).